The following is a 623-amino-acid chain: Alpha-1,2-mannosyltransferase Alg9 (623 aa).

The next 8 membrane-spanning stretches (helical) occupy residues 152-172, 193-223, 229-254, 266-284, 326-348, 360-378, 390-410, and 431-452; these read LIFY…ERYM, LFSV…AAWW, FAIF…PLVL, FVQW…MIAI, FLNF…IDYL, FPHY…VFFA, IYPL…RIFF, and FIAI…FALY.

It belongs to the glycosyltransferase 22 family.

Its subcellular location is the endoplasmic reticulum membrane. It carries out the reaction an alpha-D-Man-(1-&gt;2)-alpha-D-Man-(1-&gt;2)-alpha-D-Man-(1-&gt;3)-[alpha-D-Man-(1-&gt;3)-alpha-D-Man-(1-&gt;6)]-beta-D-Man-(1-&gt;4)-beta-D-GlcNAc-(1-&gt;4)-alpha-D-GlcNAc-diphospho-di-trans,poly-cis-dolichol + a di-trans,poly-cis-dolichyl beta-D-mannosyl phosphate = an alpha-D-Man-(1-&gt;2)-alpha-D-Man-(1-&gt;2)-alpha-D-Man-(1-&gt;3)-[alpha-D-Man-(1-&gt;2)-alpha-D-Man-(1-&gt;3)-alpha-D-Man-(1-&gt;6)]-beta-D-Man-(1-&gt;4)-beta-D-GlcNAc-(1-&gt;4)-alpha-D-GlcNAc-diphospho-di-trans,poly-cis-dolichol + a di-trans,poly-cis-dolichyl phosphate + H(+). The catalysed reaction is an alpha-D-Man-(1-&gt;2)-alpha-D-Man-(1-&gt;2)-alpha-D-Man-(1-&gt;3)-[alpha-D-Man-(1-&gt;2)-alpha-D-Man-(1-&gt;3)-[alpha-D-Man-(1-&gt;6)]-alpha-D-Man-(1-&gt;6)]-beta-D-Man-(1-&gt;4)-beta-D-GlcNAc-(1-&gt;4)-alpha-D-GlcNAc-diphospho-di-trans,poly-cis-dolichol + a di-trans,poly-cis-dolichyl beta-D-mannosyl phosphate = an alpha-D-Man-(1-&gt;2)-alpha-D-Man-(1-&gt;2)-alpha-D-Man-(1-&gt;3)-[alpha-D-Man-(1-&gt;2)-alpha-D-Man-(1-&gt;3)-[alpha-D-Man-(1-&gt;2)-alpha-D-Man-(1-&gt;6)]-alpha-D-Man-(1-&gt;6)]-beta-D-Man-(1-&gt;4)-beta-D-GlcNAc-(1-&gt;4)-alpha-D-GlcNAc-diphospho-di-trans,poly-cis-dolichol + a di-trans,poly-cis-dolichyl phosphate + H(+). Its pathway is protein modification; protein glycosylation. Its function is as follows. Probable alpha-1,2-mannosyltransferase involved in the N-glycosylation pathway. Probably involved in glycosylation of the TNF receptor grnd, regulating its ligand affinity. Required for normal epithelial growth and architecture. Suppressor of JNK-dependent intestinal stem cell proliferation. The polypeptide is Alpha-1,2-mannosyltransferase Alg9 (Drosophila melanogaster (Fruit fly)).